Consider the following 30-residue polypeptide: Antifungal protein Lap (30 aa).

Functionally, displays antifungal activity against M.arachidicola and P.piricola, but not against R.solani, C.gossypii and C.comatus. Inhibits mycelial growth in P.piricola with an IC(50) of 70 nM. Displays very low cell-free translation inhibitory activity in a rabbit reticulocyte lysate system (IC(50)=70 uM) but is able to inhibit HIV-1 reverse transcriptase activity (IC(50)=5.2 nM). The sequence is that of Antifungal protein Lap from Lyophyllum shimeji (Hon-shimeji).